We begin with the raw amino-acid sequence, 117 residues long: Large ribosomal subunit protein bL20c (117 aa).

It belongs to the bacterial ribosomal protein bL20 family.

It localises to the plastid. Its subcellular location is the chloroplast. Functionally, binds directly to 23S ribosomal RNA and is necessary for the in vitro assembly process of the 50S ribosomal subunit. It is not involved in the protein synthesizing functions of that subunit. The polypeptide is Large ribosomal subunit protein bL20c (Morus indica (Mulberry)).